The chain runs to 187 residues: Pyridoxal 5'-phosphate synthase subunit PdxT (187 aa).

47-49 contacts L-glutamine; that stretch reads GES. The active-site Nucleophile is the Cys-76. L-glutamine contacts are provided by residues Arg-102 and 128 to 129; that span reads IR. Residues His-165 and Glu-167 each act as charge relay system in the active site.

This sequence belongs to the glutaminase PdxT/SNO family. In the presence of PdxS, forms a dodecamer of heterodimers. Only shows activity in the heterodimer.

The enzyme catalyses aldehydo-D-ribose 5-phosphate + D-glyceraldehyde 3-phosphate + L-glutamine = pyridoxal 5'-phosphate + L-glutamate + phosphate + 3 H2O + H(+). It carries out the reaction L-glutamine + H2O = L-glutamate + NH4(+). It participates in cofactor biosynthesis; pyridoxal 5'-phosphate biosynthesis. In terms of biological role, catalyzes the hydrolysis of glutamine to glutamate and ammonia as part of the biosynthesis of pyridoxal 5'-phosphate. The resulting ammonia molecule is channeled to the active site of PdxS. The sequence is that of Pyridoxal 5'-phosphate synthase subunit PdxT from Methanococcus maripaludis (strain C5 / ATCC BAA-1333).